The primary structure comprises 73 residues: Protein SlyX homolog (73 aa).

It belongs to the SlyX family.

This Histophilus somni (strain 2336) (Haemophilus somnus) protein is Protein SlyX homolog.